Consider the following 599-residue polypeptide: CAP-Gly domain-containing linker protein 4 (599 aa).

3 ANK repeats span residues 65–101, 149–180, and 186–215; these read TSVSELFAILRQWVPQVQQNIDIIGNEILKRGCNVND, TNMNALHYASYFDVPELIRVLLKTSKPKDVDA, and NFGTALHIAAHNLCAGAVKTLLELGANPAF. The CAP-Gly 1 domain maps to 303 to 345; it reads GTTEFASGQWAGIELDEPEGKNNGSVGRVQYFKCAPKYGIFAP. Positions 387–482 are disordered; it reads SGLMTSKKEN…TSAANNTHRE (96 aa). Residues 443–462 show a composition bias toward low complexity; sequence LSTSSSSGKKTLSKSPSLPS. The span at 468 to 478 shows a compositional bias: polar residues; the sequence is LKSSTTSAANN. The CAP-Gly 2 domain occupies 505-547; it reads GTTNFAPGYWYGIELEKPHGKNDGSVGGVQYFSCSPRYGIFAP. The residue at position 557 (Ser557) is a Phosphoserine. The disordered stretch occupies residues 565 to 599; it reads SSNKQNHSYPGFRRSFSTTSASSQKEINRRNAFAK. Positions 576-587 are enriched in low complexity; sequence FRRSFSTTSASS.

The polypeptide is CAP-Gly domain-containing linker protein 4 (Clip4) (Rattus norvegicus (Rat)).